The chain runs to 552 residues: Non-structural protein NS1 (552 aa).

Belongs to the orbivirus non-structural protein NS1 family.

This chain is Non-structural protein NS1 (Segment-5), found in Bluetongue virus 10 (isolate USA) (BTV 10).